We begin with the raw amino-acid sequence, 564 residues long: Dihydroxy-acid dehydratase (564 aa).

Cysteine 55 serves as a coordination point for [2Fe-2S] cluster. A Mg(2+)-binding site is contributed by aspartate 87. Cysteine 128 contacts [2Fe-2S] cluster. Residues aspartate 129 and lysine 130 each coordinate Mg(2+). An N6-carboxylysine modification is found at lysine 130. [2Fe-2S] cluster is bound at residue cysteine 200. Glutamate 452 lines the Mg(2+) pocket. The active-site Proton acceptor is serine 478.

Belongs to the IlvD/Edd family. Homodimer. It depends on [2Fe-2S] cluster as a cofactor. Mg(2+) serves as cofactor.

The catalysed reaction is (2R)-2,3-dihydroxy-3-methylbutanoate = 3-methyl-2-oxobutanoate + H2O. It catalyses the reaction (2R,3R)-2,3-dihydroxy-3-methylpentanoate = (S)-3-methyl-2-oxopentanoate + H2O. The protein operates within amino-acid biosynthesis; L-isoleucine biosynthesis; L-isoleucine from 2-oxobutanoate: step 3/4. It participates in amino-acid biosynthesis; L-valine biosynthesis; L-valine from pyruvate: step 3/4. Functions in the biosynthesis of branched-chain amino acids. Catalyzes the dehydration of (2R,3R)-2,3-dihydroxy-3-methylpentanoate (2,3-dihydroxy-3-methylvalerate) into 2-oxo-3-methylpentanoate (2-oxo-3-methylvalerate) and of (2R)-2,3-dihydroxy-3-methylbutanoate (2,3-dihydroxyisovalerate) into 2-oxo-3-methylbutanoate (2-oxoisovalerate), the penultimate precursor to L-isoleucine and L-valine, respectively. This chain is Dihydroxy-acid dehydratase, found in Albidiferax ferrireducens (strain ATCC BAA-621 / DSM 15236 / T118) (Rhodoferax ferrireducens).